Reading from the N-terminus, the 246-residue chain is MRSGVITQKLGMTSIYNDTGERVPVTVLRLENCQVIAQRTVEKNGYTAVQLGVGLAKFEKTSKALRGHFSKALVEPKAKIVEFRVSSDNLLDVGTEITVEHFVPGQRVDVTGTSIGKGFAGVMKRHNFGGHRASHGNSITHRAHGSTGQCQDPGKVFKGKKMAGHMGQVRVTTQNVEVVSIDVDRGLILVRGAVSGSKGAWVLVRDAVKKRLPDNAPRPAGVRSPANVKVKPATPIAEVSVAEGVE.

Q151 carries the post-translational modification N5-methylglutamine.

The protein belongs to the universal ribosomal protein uL3 family. As to quaternary structure, part of the 50S ribosomal subunit. Forms a cluster with proteins L14 and L19. Post-translationally, methylated by PrmB.

In terms of biological role, one of the primary rRNA binding proteins, it binds directly near the 3'-end of the 23S rRNA, where it nucleates assembly of the 50S subunit. This Bartonella bacilliformis (strain ATCC 35685 / KC583 / Herrer 020/F12,63) protein is Large ribosomal subunit protein uL3.